The primary structure comprises 323 residues: Elongation factor P--(R)-beta-lysine ligase (323 aa).

76–78 (SPE) is a substrate binding site. ATP contacts are provided by residues 100–102 (RNE) and Asn109. Residue Tyr118 coordinates substrate. 242-243 (EL) serves as a coordination point for ATP. Glu249 contributes to the substrate binding site. Gly298 is an ATP binding site.

Belongs to the class-II aminoacyl-tRNA synthetase family. EpmA subfamily. In terms of assembly, homodimer.

The catalysed reaction is D-beta-lysine + L-lysyl-[protein] + ATP = N(6)-((3R)-3,6-diaminohexanoyl)-L-lysyl-[protein] + AMP + diphosphate + H(+). With EpmB is involved in the beta-lysylation step of the post-translational modification of translation elongation factor P (EF-P). Catalyzes the ATP-dependent activation of (R)-beta-lysine produced by EpmB, forming a lysyl-adenylate, from which the beta-lysyl moiety is then transferred to the epsilon-amino group of a conserved specific lysine residue in EF-P. This Actinobacillus succinogenes (strain ATCC 55618 / DSM 22257 / CCUG 43843 / 130Z) protein is Elongation factor P--(R)-beta-lysine ligase.